Reading from the N-terminus, the 717-residue chain is MIHAGNAITVQMLSDGIAEFRFDLQGESVNKFNRATIEDFQAAIEAVKNHPEVKGLIVTSAKSTFIVGADITEFGQNFAQGEKAIVEWALPVHDIFNSFEDLDIPKVAAINGMALGGGFEMCLVCDYRVMSDQAQVGLPEIKLGIFPGFGGTVRLSRLIGIDNAVEWIAMAAPKKPAAALKDGAVDAVVSADKLQEAAIDLVKQALAGRVDWKAKRQEKLNPVKLNPLEQMMAFNTAKGAVLAKANPAQYPAPKLMLDSLQAGASLGRDEALKVETEGFAKAAITPQAEALIGLFLNDQIIKKTSKKHEKGAHPVNQAAVLGAGIMGGGIAYQAASKGTPIIMKDIGNPQLALGMQEANGLLTKQVERKKLTPAKMGETLARIRPTLSYDEFKEVDIVIEAVTENPKIKEAVLADTEAKVRDNTIIASNTSTISITRLAKALKRPENFVGMHFFNPVHMMPLVEVIRGEQTSEEAVATTVVLAQKMGKTPIVVNDCPGFLVNRVLFPYFGAFDLLLKDGADFQQIDKVMEKFGWPMGPAYLMDVVGIDTGVHGAEVMAEGFPDRMKPDYKGSIQTMYEAKRLGQKNDVGFYKYELDKKGKKAKTVDSTAYEVIAPVVTSEKREFDAQEIIDRMMLALCNETVRCLEDNIVATPAEADMAMIMGIGFPPFRGGPCRYIDQTGVAEYVALCNKYAHLGKAYEAPQLLRDMAENNKKFYG.

An enoyl-CoA hydratase/isomerase region spans residues 1–190 (MIHAGNAITV…KDGAVDAVVS (190 aa)). Substrate is bound at residue aspartate 298. A 3-hydroxyacyl-CoA dehydrogenase region spans residues 313-717 (HPVNQAAVLG…MAENNKKFYG (405 aa)). NAD(+)-binding positions include methionine 326, aspartate 345, 402–404 (VTE), lysine 409, and serine 431. Residue histidine 452 is the For 3-hydroxyacyl-CoA dehydrogenase activity of the active site. Asparagine 455 is a binding site for NAD(+). Asparagine 502 contacts substrate.

In the N-terminal section; belongs to the enoyl-CoA hydratase/isomerase family. The protein in the C-terminal section; belongs to the 3-hydroxyacyl-CoA dehydrogenase family. In terms of assembly, heterotetramer of two alpha chains (FadB) and two beta chains (FadA).

The enzyme catalyses a (3S)-3-hydroxyacyl-CoA + NAD(+) = a 3-oxoacyl-CoA + NADH + H(+). It carries out the reaction a (3S)-3-hydroxyacyl-CoA = a (2E)-enoyl-CoA + H2O. It catalyses the reaction a 4-saturated-(3S)-3-hydroxyacyl-CoA = a (3E)-enoyl-CoA + H2O. The catalysed reaction is (3S)-3-hydroxybutanoyl-CoA = (3R)-3-hydroxybutanoyl-CoA. The enzyme catalyses a (3Z)-enoyl-CoA = a 4-saturated (2E)-enoyl-CoA. It carries out the reaction a (3E)-enoyl-CoA = a 4-saturated (2E)-enoyl-CoA. Its pathway is lipid metabolism; fatty acid beta-oxidation. Involved in the aerobic and anaerobic degradation of long-chain fatty acids via beta-oxidation cycle. Catalyzes the formation of 3-oxoacyl-CoA from enoyl-CoA via L-3-hydroxyacyl-CoA. It can also use D-3-hydroxyacyl-CoA and cis-3-enoyl-CoA as substrate. The protein is Fatty acid oxidation complex subunit alpha of Acinetobacter baylyi (strain ATCC 33305 / BD413 / ADP1).